The following is a 399-amino-acid chain: P2X purinoceptor 1 (399 aa).

At 1 to 28 (MARRLQDELSAFFFEYDTPRMVLVRNKK) the chain is on the cytoplasmic side. The helical transmembrane segment at 29-50 (VGVIFRLIQLVVLVYVIGWVFV) threads the bilayer. Over 51–338 (YEKGYQTSSG…IPTMTTIGSG (288 aa)) the chain is Extracellular. 3 residues coordinate CTP: lysine 68, lysine 70, and lysine 140. Position 70 (lysine 70) interacts with ATP. 3 cysteine pairs are disulfide-bonded: cysteine 117–cysteine 165, cysteine 126–cysteine 149, and cysteine 132–cysteine 159. 2 N-linked (GlcNAc...) asparagine glycosylation sites follow: asparagine 153 and asparagine 184. Threonine 186 is a binding site for CTP. Position 186 (threonine 186) interacts with ATP. N-linked (GlcNAc...) asparagine glycosylation is present at asparagine 210. 2 disulfide bridges follow: cysteine 217/cysteine 227 and cysteine 261/cysteine 270. Residues serine 286, asparagine 290, and arginine 292 each contribute to the ATP site. CTP-binding residues include asparagine 290 and arginine 292. The N-linked (GlcNAc...) asparagine glycan is linked to asparagine 300. Lysine 309 is a binding site for CTP. Lysine 309 is a binding site for ATP. The interval 331 to 338 (TMTTIGSG) is pore-forming motif. Residues 339–358 (IGIFGVATVLCDLLLLHILP) traverse the membrane as a helical segment. The Cytoplasmic portion of the chain corresponds to 359–399 (KRHYYKQKKFKYAEDMGPGEGERDPAATSSTLGLQENMRTS). A disordered region spans residues 374–399 (MGPGEGERDPAATSSTLGLQENMRTS). A compositionally biased stretch (polar residues) spans 385-399 (ATSSTLGLQENMRTS). Serine 387 and serine 388 each carry phosphoserine. A Phosphothreonine modification is found at threonine 389.

Belongs to the P2X receptor family. In terms of assembly, functional P2XRs are organized as homomeric and heteromeric trimers. Forms heterodimer with P2RX2. Forms heterodimer with P2RX4. Forms heterodimer with P2RX5. In terms of tissue distribution, expressed in smooth muscle of the bladder and arteries.

The protein localises to the cell membrane. The enzyme catalyses Ca(2+)(in) = Ca(2+)(out). The catalysed reaction is K(+)(in) = K(+)(out). It carries out the reaction Na(+)(in) = Na(+)(out). Its activity is regulated as follows. Activated by low concentrations of ATP (&lt;1 uM). Undergoes rapid desensitisation. Sensitives to the ATP agonist:alpha/beta-methylene-ATP. Modulated by cholesterol. ATP-gated nonselective transmembrane cation channel permeable to potassium, sodium and with relatively high calcium permeability. Furthermore, CTP functions as a weak affinity agonist for P2RX1. Plays a role in male fertility, bladder contraction and platelet aggregation. Specifically, plays an important role in neurogenic contraction of smooth muscle of the vas deferens, and therefore is essential for normal male reproductive function. In addition, contributes to smooth muscle contractions of the urinary bladder. On platelets, contributes to platelet activation and aggregation and thereby, also to thrombosis. On neutrophils, it is involved in chemotaxis and in mitigating the activation of circulating cells. This is P2X purinoceptor 1 (P2rx1) from Mus musculus (Mouse).